The primary structure comprises 466 residues: Uronate isomerase (466 aa).

This sequence belongs to the metallo-dependent hydrolases superfamily. Uronate isomerase family.

It carries out the reaction D-glucuronate = D-fructuronate. The catalysed reaction is aldehydo-D-galacturonate = keto-D-tagaturonate. It functions in the pathway carbohydrate metabolism; pentose and glucuronate interconversion. In Streptococcus agalactiae serotype V (strain ATCC BAA-611 / 2603 V/R), this protein is Uronate isomerase.